A 607-amino-acid polypeptide reads, in one-letter code: Elongation factor 4 (607 aa).

The 183-residue stretch at 11–193 (KKIRNFSIIA…QIVELVPPPT (183 aa)) folds into the tr-type G domain. GTP-binding positions include 23-28 (DHGKST) and 140-143 (NKID).

The protein belongs to the TRAFAC class translation factor GTPase superfamily. Classic translation factor GTPase family. LepA subfamily.

It localises to the cell membrane. It catalyses the reaction GTP + H2O = GDP + phosphate + H(+). In terms of biological role, required for accurate and efficient protein synthesis under certain stress conditions. May act as a fidelity factor of the translation reaction, by catalyzing a one-codon backward translocation of tRNAs on improperly translocated ribosomes. Back-translocation proceeds from a post-translocation (POST) complex to a pre-translocation (PRE) complex, thus giving elongation factor G a second chance to translocate the tRNAs correctly. Binds to ribosomes in a GTP-dependent manner. The chain is Elongation factor 4 from Exiguobacterium sp. (strain ATCC BAA-1283 / AT1b).